A 284-amino-acid polypeptide reads, in one-letter code: Signal peptidase I (284 aa).

A helical membrane pass occupies residues 4–22 (NFPLLLVIAVAVCGLLALL). At 23 to 58 (DLVFFAPRRRSAIASYQGSVSQPDAVVIEKLNKEPL) the chain is on the cytoplasmic side. Residues 59–77 (LVEYGKSFFPVLFIVLVLR) traverse the membrane as a helical segment. Topologically, residues 78 to 284 (SFLVEPFQIP…PNFSRVGLIK (207 aa)) are periplasmic. Residues Ser90 and Lys145 contribute to the active site.

This sequence belongs to the peptidase S26 family.

Its subcellular location is the cell inner membrane. It catalyses the reaction Cleavage of hydrophobic, N-terminal signal or leader sequences from secreted and periplasmic proteins.. This Pseudomonas fluorescens protein is Signal peptidase I (lepB).